The following is a 192-amino-acid chain: Potassium channel HX13_20290 (192 aa).

The chain crosses the membrane as a helical span at residues 1–24 (MTKGRLEAFSDGVLAIIITIMVLE). The RxxxFSD motif motif lies at 5 to 11 (RLEAFSD). A topological domain (cytoplasmic) is located at residue Leu-25. The short helix H1 stretch occupies residues 26–29 (KVPE). Residues 26-39 (KVPEGSSWASLQPI) lie on the Extracellular side of the membrane. The segment at 31 to 37 (SSWASLQ) is short helix H2. A helical transmembrane segment spans residues 40 to 65 (LPRFLAYIFSFIYVGIYWNNHHHLFQ). Topologically, residues 66–71 (TVKKVN) are cytoplasmic. Residues 72 to 93 (GSILWANLHLLFWLSLMPIATE) traverse the membrane as a helical segment. Residues 94–101 (WIGTSHFA) are Extracellular-facing. The chain crosses the membrane as a helical span at residues 102–126 (QNPVATYGIGLIMSAIAYTILENVI). Topologically, residues 127 to 133 (IRCEGEN) are cytoplasmic. A helical membrane pass occupies residues 134 to 162 (SKLKEAIHSKFKEYISIIFYVLGIATSFF). Over 163 to 164 (YP) the chain is Extracellular. Residues 165 to 180 (YIAIGFYYLVALIWLI) traverse the membrane as a helical segment. The Cytoplasmic segment spans residues 181–192 (PDKRIEKSLKEN).

It belongs to the TMEM175 family. As to quaternary structure, homotetramer.

It is found in the membrane. The enzyme catalyses K(+)(in) = K(+)(out). Potassium channel. The sequence is that of Potassium channel HX13_20290 from Chryseobacterium sp. (strain P1-3).